We begin with the raw amino-acid sequence, 139 residues long: NAD(P) transhydrogenase subunit alpha part 2 (139 aa).

Transmembrane regions (helical) follow at residues 49 to 69, 78 to 98, and 107 to 127; these read FWWL…VVWS, LMGV…IATG, and VLGF…FIVT.

In terms of assembly, complex of an alpha and a beta chain; in Rhodospirillum, the alpha chain seems to be made of two subunits.

The protein resides in the cell inner membrane. The catalysed reaction is NAD(+) + NADPH + H(+)(in) = NADH + NADP(+) + H(+)(out). In terms of biological role, the transhydrogenation between NADH and NADP is coupled to respiration and ATP hydrolysis and functions as a proton pump across the membrane. The sequence is that of NAD(P) transhydrogenase subunit alpha part 2 (pntAB) from Rhodospirillum rubrum (strain ATCC 11170 / ATH 1.1.1 / DSM 467 / LMG 4362 / NCIMB 8255 / S1).